Reading from the N-terminus, the 448-residue chain is UDP-N-acetylmuramate--L-alanine ligase (448 aa).

118–124 lines the ATP pocket; it reads GTHGKTT.

It belongs to the MurCDEF family.

Its subcellular location is the cytoplasm. The enzyme catalyses UDP-N-acetyl-alpha-D-muramate + L-alanine + ATP = UDP-N-acetyl-alpha-D-muramoyl-L-alanine + ADP + phosphate + H(+). It functions in the pathway cell wall biogenesis; peptidoglycan biosynthesis. Functionally, cell wall formation. This chain is UDP-N-acetylmuramate--L-alanine ligase, found in Flavobacterium psychrophilum (strain ATCC 49511 / DSM 21280 / CIP 103535 / JIP02/86).